Reading from the N-terminus, the 83-residue chain is uncharacterized protein (83 aa).

3 consecutive transmembrane segments (helical) span residues valine 5–isoleucine 22, isoleucine 32–alanine 49, and isoleucine 56–alanine 78.

The protein localises to the cell membrane. This is an uncharacterized protein from Rickettsia prowazekii (strain Madrid E).